The sequence spans 164 residues: OV-17 antigen (164 aa).

An N-terminal signal peptide occupies residues 1-16 (MKFVILLTIGLLVVAA). Residues 24-43 (QQQQQQQQQRDEREIPPFLE) form a disordered region.

It belongs to the SXP/RAL-2 family. In terms of tissue distribution, high levels in the hypodermal layer of the adult female.

The protein is OV-17 antigen (OV17) of Onchocerca volvulus.